A 555-amino-acid chain; its full sequence is MSSSDARSRIRDRGYSEVPRDTSCPDGTIRTFQSLHSSELAVSADPLPPPPLPLQPPFGPSFYSSDTEEPAVAPDLKPVRRFVPDSWKNFFRGKKKDPEWDNPVSDIRYISDGVECSPPASPARANHHPYKDPSRGSQGTFNSQHEADAMFAHDPYASLDRRTQTARTYSEKVEEYNLRYAYMKSWAGLLRILGVVELLLGAGVFACVTAYIHKDNEWYNLFGYTQPYGMGGLGSLGNTYGGYYYSGPKTPFVLVVAGLAWITTIIILVLGMSMYYRTILLDSNWWPLTEFGVNVALFILYMAAAIVYVNDTNRGGLCYYPLFNTPMNAMFCRVEGGQIAAMIFLFVTMIVYLVSALVCLKLWRHEAARRHREFLEQQEINDPSLSSKRKMCEAAISDRQRDQEVNVKDLRTTTKMTPELLSGHIPPGHIPKPIVMPDYVAKYPVIQTDDDRERYKAVFQDQFSEYKELSAEVQAILRKFDELDTVMSRLPHHSENRQEHERISRIHEEFRKKKNDPSFLEKKERCDYLKNKLSHIKQRIQEYDKVMNWDTQGYP.

Over residues 1–20 (MSSSDARSRIRDRGYSEVPR) the composition is skewed to basic and acidic residues. A disordered region spans residues 1 to 71 (MSSSDARSRI…FYSSDTEEPA (71 aa)). Residues 1 to 191 (MSSSDARSRI…YMKSWAGLLR (191 aa)) lie on the Cytoplasmic side of the membrane. Pro residues predominate over residues 46-59 (PLPPPPLPLQPPFG). A phosphoserine mark is found at S117, S121, and S158. Residues 118-142 (PPASPARANHHPYKDPSRGSQGTFN) form a disordered region. T163 carries the phosphothreonine modification. The MARVEL domain occupies 185 to 364 (SWAGLLRILG…SALVCLKLWR (180 aa)). A helical membrane pass occupies residues 192–212 (ILGVVELLLGAGVFACVTAYI). Residues 213 to 251 (HKDNEWYNLFGYTQPYGMGGLGSLGNTYGGYYYSGPKTP) lie on the Extracellular side of the membrane. The helical transmembrane segment at 252-272 (FVLVVAGLAWITTIIILVLGM) threads the bilayer. At 273 to 288 (SMYYRTILLDSNWWPL) the chain is on the cytoplasmic side. A helical membrane pass occupies residues 289–309 (TEFGVNVALFILYMAAAIVYV). Topologically, residues 310-338 (NDTNRGGLCYYPLFNTPMNAMFCRVEGGQ) are extracellular. The chain crosses the membrane as a helical span at residues 339 to 359 (IAAMIFLFVTMIVYLVSALVC). Over 360-555 (LKLWRHEAAR…VMNWDTQGYP (196 aa)) the chain is Cytoplasmic. A Phosphoserine modification is found at S384. Residue K408 forms a Glycyl lysine isopeptide (Lys-Gly) (interchain with G-Cter in ubiquitin) linkage. Residues 437 to 548 (PDYVAKYPVI…RIQEYDKVMN (112 aa)) form the OCEL domain. Residues 521–545 (EKKERCDYLKNKLSHIKQRIQEYDK) adopt a coiled-coil conformation.

This sequence belongs to the ELL/occludin family. Interacts with TJP1. Interacts with the ubiquitin ligase ITCH. Interacts (via C-terminal cytoplasmic domain) with LSR (via the cytoplasmic domain), ILDR1 and ILDR2; the interaction is required to recruit MARVELD2 to tricellular contacts. Post-translationally, ubiquitinated by ITCH; but this ubiquitination does not lead to proteasomal degradation. Polyubiquitinated at Lys-408 via 'Lys-63'-linked ubiquitin chains; deubiquitinated by USP53. Phosphorylated. Detected in small intestine, stomach and kidney, in epithelial cells. Detected in pancreas, retina and lung, and in stria vascularis, utricle and the organ of Conti in the inner ear (at protein level). Predominantly detected in small intestine, lung and kidney, with lower levels in liver, testis and brain. In colon, expressed in the entire crypts.

Its subcellular location is the cell membrane. It localises to the cell junction. The protein localises to the tight junction. In terms of biological role, plays a role in the formation of tricellular tight junctions and of epithelial barriers. Required for normal hearing via its role in the separation of the endolymphatic and perilymphatic spaces of the organ of Corti in the inner ear, and for normal survival of hair cells in the organ of Corti. The sequence is that of MARVEL domain-containing protein 2 from Mus musculus (Mouse).